A 1400-amino-acid chain; its full sequence is DNA-directed RNA polymerase subunit beta' (1400 aa).

4 residues coordinate Zn(2+): cysteine 70, cysteine 72, cysteine 85, and cysteine 88. Mg(2+)-binding residues include aspartate 460, aspartate 462, and aspartate 464. Cysteine 814, cysteine 887, cysteine 894, and cysteine 897 together coordinate Zn(2+).

It belongs to the RNA polymerase beta' chain family. In terms of assembly, the RNAP catalytic core consists of 2 alpha, 1 beta, 1 beta' and 1 omega subunit. When a sigma factor is associated with the core the holoenzyme is formed, which can initiate transcription. Requires Mg(2+) as cofactor. Zn(2+) is required as a cofactor.

The enzyme catalyses RNA(n) + a ribonucleoside 5'-triphosphate = RNA(n+1) + diphosphate. DNA-dependent RNA polymerase catalyzes the transcription of DNA into RNA using the four ribonucleoside triphosphates as substrates. The sequence is that of DNA-directed RNA polymerase subunit beta' from Marinomonas sp. (strain MWYL1).